The following is a 356-amino-acid chain: Peptide chain release factor 1 (356 aa).

Glutamine 235 bears the N5-methylglutamine mark.

This sequence belongs to the prokaryotic/mitochondrial release factor family. Methylated by PrmC. Methylation increases the termination efficiency of RF1.

The protein resides in the cytoplasm. Peptide chain release factor 1 directs the termination of translation in response to the peptide chain termination codons UAG and UAA. This chain is Peptide chain release factor 1, found in Mycobacteroides abscessus (strain ATCC 19977 / DSM 44196 / CCUG 20993 / CIP 104536 / JCM 13569 / NCTC 13031 / TMC 1543 / L948) (Mycobacterium abscessus).